A 325-amino-acid chain; its full sequence is MKVTIVELVVWLFSVNFFVVVAEESRWTLVDDHYGKNLHESVCYLRCLSNALNKLYSEGERRLFVNEEVYANASRILDDMEGKTGESTTYLSVVSSEMGGENNKLEKLISYGNAMGDLVAKVGGLFAEVNESVRAVREEIPSALIRANKYYTAIAEITRTVWDDVNRPLQQDKATCGDQKVTGVGELKTECGAHTCPLSDGVNESALQKYKGGCLEINVMSGSVSECFNLPRNKLYRSVALSSSHGFLKWYQDEAKRFQLGLRVKNIFGPLIASFGVGQPPSVLAEMINNITSLQSRFNEVHSNFTSILLADNLTADVDNTDSTI.

Residues 1-23 (MKVTIVELVVWLFSVNFFVVVAE) form the signal peptide. N-linked (GlcNAc...) asparagine glycans are attached at residues asparagine 72, asparagine 290, and asparagine 313.

Not known but may be related to activation of the variant surface glycoprotein genes. This is VSG expression site-associated protein 117A from Trypanosoma brucei brucei.